Here is a 3459-residue protein sequence, read N- to C-terminus: uncharacterized protein (3459 aa).

A compositionally biased stretch (acidic residues) spans 158 to 167; the sequence is NDDDWIFNED. Disordered stretches follow at residues 158–230 and 400–447; these read NDDD…NNNN and YGYI…NDEK. A compositionally biased stretch (basic and acidic residues) spans 168 to 184; it reads DEKKNKNNDGNDNRYDY. The span at 185–201 shows a compositional bias: low complexity; the sequence is NDLQNNNNNDNNKYDYN. The span at 204–221 shows a compositional bias: basic and acidic residues; that stretch reads DDEKKNKNNDGDDNKYDY. Positions 406–443 are enriched in acidic residues; the sequence is DNDDGDDYNDDNDNDDNYNDDNYNDDNYNDDNYNDDNY. Residues 771 to 851 are a coiled coil; the sequence is VNEKKKGENE…NEMNKDEENE (81 aa). A helical transmembrane segment spans residues 1059-1079; that stretch reads LIYMIYLFFTYKKYDLLLMFI. Disordered stretches follow at residues 1148–1187, 1399–1467, and 1711–1733; these read RRQE…NDYD, IPTQ…NDDD, and QKKK…NKEN. The span at 1404–1463 shows a compositional bias: basic and acidic residues; the sequence is DKNETDEGNKNETDEGDKNETDEGDKNETDEGNKNETEEIYKNETDEGNKNETEEIYKND. Helical transmembrane passes span 2059–2079 and 2197–2217; these read FLLF…IFFF and IIQC…DFLF. Disordered regions lie at residues 2582–2644 and 2776–2835; these read IYKD…DNNN and GRIW…DKGD. The segment covering 2592 to 2629 has biased composition (acidic residues); it reads DNNDDDNINDDDNINDDDNINDDDNNNDDDNNNDDNND. Over residues 2779–2821 the composition is skewed to basic and acidic residues; the sequence is WKREENGEKKKNEKNESEKNERNEKNEKNEKHEKHEKHEKNEK. A coiled-coil region spans residues 2785 to 2820; the sequence is GEKKKNEKNESEKNERNEKNEKNEKHEKHEKHEKNE. 2 helical membrane passes run 3229–3249 and 3296–3316; these read LFII…SFIL and LLFF…NINS.

Its subcellular location is the membrane. This is an uncharacterized protein from Plasmodium falciparum (isolate 3D7).